The following is a 426-amino-acid chain: Glutamate-1-semialdehyde 2,1-aminomutase (426 aa).

Residue K265 is modified to N6-(pyridoxal phosphate)lysine.

It belongs to the class-III pyridoxal-phosphate-dependent aminotransferase family. HemL subfamily. As to quaternary structure, homodimer. It depends on pyridoxal 5'-phosphate as a cofactor.

It localises to the cytoplasm. It carries out the reaction (S)-4-amino-5-oxopentanoate = 5-aminolevulinate. It functions in the pathway porphyrin-containing compound metabolism; protoporphyrin-IX biosynthesis; 5-aminolevulinate from L-glutamyl-tRNA(Glu): step 2/2. The sequence is that of Glutamate-1-semialdehyde 2,1-aminomutase from Escherichia coli O9:H4 (strain HS).